Reading from the N-terminus, the 188-residue chain is Putative glutamine amidotransferase-like protein YvdE homolog (188 aa).

Positions 17 to 188 (SPFWWNKVSY…IKDLGQGLQA (172 aa)) constitute a Glutamine amidotransferase type-1 domain.

This is Putative glutamine amidotransferase-like protein YvdE homolog from Lactococcus lactis subsp. cremoris (Streptococcus cremoris).